We begin with the raw amino-acid sequence, 325 residues long: Heat-inducible transcription repressor HrcA (325 aa).

Belongs to the HrcA family.

In terms of biological role, negative regulator of class I heat shock genes (grpE-dnaK-dnaJ and groELS operons). Prevents heat-shock induction of these operons. This chain is Heat-inducible transcription repressor HrcA, found in Staphylococcus aureus (strain bovine RF122 / ET3-1).